Consider the following 397-residue polypeptide: Lysophospholipid transporter LplT (397 aa).

At 1-17 (MSESVHTNTSLWSKGMK) the chain is on the periplasmic side. Residues 18–38 (AVIVAQFLSAFGDNALLFATL) form a helical membrane-spanning segment. The Cytoplasmic portion of the chain corresponds to 39-52 (ALLKAQFYPEWSQP). The helical transmembrane segment at 53 to 73 (ILQMVFVGAYILFAPFVGQVA) threads the bilayer. Topologically, residues 74-90 (DSFAKGRVMMFANGLKL) are periplasmic. Residues 91–111 (LGAASICFGINPFLGYTLVGV) traverse the membrane as a helical segment. Over 112-144 (GAAAYSPAKYGILGELTTGSKLVKANGLMEAST) the chain is Cytoplasmic. A helical membrane pass occupies residues 145–165 (IAAILLGSVAGGVLADWHVLV). Position 166 (Ala166) is a topological domain, periplasmic. The helical transmembrane segment at 167-187 (LAACALAYGGAVVANIYIPKL) threads the bilayer. Residues 188–226 (AAARPGQSWNLINMTRSFLNACTSLWRNGETRFSLVGTS) lie on the Cytoplasmic side of the membrane. The chain crosses the membrane as a helical span at residues 227–247 (LFWGAGVTLRFLLVLWVPVAL). Topologically, residues 248–256 (GITDNATPT) are periplasmic. The helical transmembrane segment at 257–277 (YLNAMVAIGIVVGAGAAAKLV) threads the bilayer. At 278–280 (TLE) the chain is on the cytoplasmic side. A helical transmembrane segment spans residues 281–301 (TVSRCMPAGILIGVVVLIFSL). Over 302–304 (QHE) the chain is Periplasmic. Residues 305–325 (LLPAYALLMLIGVLGGFFVVP) form a helical membrane-spanning segment. Residues 326 to 343 (LNALLQERGKKSVGAGNA) are Cytoplasmic-facing. Residues 344-364 (IAVQNLGENSAMLLMLGIYSL) traverse the membrane as a helical segment. Residues 365-366 (AV) lie on the Periplasmic side of the membrane. The helical transmembrane segment at 367–387 (MVGIPVVPIGIGFGALFALAI) threads the bilayer. The Cytoplasmic segment spans residues 388-397 (TALWIWQRRY).

It belongs to the major facilitator superfamily. LplT (TC 2.A.1.42) family.

It localises to the cell inner membrane. In terms of biological role, catalyzes the facilitated diffusion of 2-acyl-glycero-3-phosphoethanolamine (2-acyl-GPE) into the cell. The chain is Lysophospholipid transporter LplT from Escherichia coli O127:H6 (strain E2348/69 / EPEC).